We begin with the raw amino-acid sequence, 606 residues long: Preterminal protein (606 aa).

The Nuclear localization signal motif lies at 320–329 (RLPVRRRRRR). O-(5'-phospho-DNA)-serine is present on Ser-515. Positions 573–606 (HLPLPERQADIPLPPLPAGPEPPLPPGARPRRRF) are disordered. A compositionally biased stretch (pro residues) spans 584 to 600 (PLPPLPAGPEPPLPPGA).

It belongs to the adenoviridae terminal protein family. As to quaternary structure, heterodimer with the polymerase; this heterodimer binds to bp 9 to 18 of the genome. Interacts with host POU2F1; POU2F1 binds to the auxiliary sequences in the inverted terminal repeats and tethers the pTP-POL heterodimer to the origin DNA thereby participating in the assembly of the pre-initiation complex (POL-TP-DBP-NFIA-POU2F1). Post-translationally, preterminal protein is used to replicate viral genome, upon genomic encapsidation it is processed first into iTP and finally into TP by adenovirus protease.

Its subcellular location is the host nucleus matrix. Functionally, protein covalently bound to the viral DNA that acts as a primer for viral genomic replication by DNA strand displacement. Assembles on the viral origin of replication in an initiation complex with viral polymerase, DBP, host NFIA and host POU2F1/OCT1. During initiation, the polymerase covalently couples the first dCTP with Ser-580 of pTP. The terminal protein stimulates the template activity over 20 fold compared to protein-free templates. Neo-synthesized viral genomes are linked to two preterminal proteins, one for each 5' end. These new genomes are encapsidated in the nucleus, and during capsid maturation by viral protease, preterminal protein is first cleaved into intermediary (iTP), then into mature TP. May play a role in host nuclear matrix localization of genomic DNA. This Human adenovirus A serotype 12 (HAdV-12) protein is Preterminal protein.